Consider the following 451-residue polypeptide: MQETILNKIIKDKIDWIKYRKKIQPLIKFKNKINKETRNFYNSLKEKRPFFILECKKSSPSLGIIRKKFNLIEIANIYKNYASAISVLTDEKYFHGNIEYINVVRRCVSQPILCKDFFIDSYQVYLARYYSADAILLMLSVLNDSQYLELSRIAKELNMGVLTEINNIKELKRAIKLNASVIGINNRNLHDLSIDLNRTRTLSPLIKNKIIVSESGIKKNHQIKELSNIVHGFLIGSSLMYRTNLETNIKSLIIGDNKVCGLTRIIDAKIVESCGAVYGGLIFADNSLRKTNEKIAEKMIFENNLRFIGVFQNQDIEKIVNIAQRLSLYAVQLHGSENQKYINILRKKLCKKIKIWKAFSIQSTLPLLNWDHIDKYIFDSGSGGTNKTFNWSILKGSILENVILAGGINTDNVLIASQLNCSGLDFNSGVEKSPGIKDHKKISLIFKKLTF.

The segment at 1-256 (MQETILNKII…TNIKSLIIGD (256 aa)) is indole-3-glycerol phosphate synthase. An N-(5'-phosphoribosyl)anthranilate isomerase region spans residues 257–451 (NKVCGLTRII…ISLIFKKLTF (195 aa)).

This sequence in the N-terminal section; belongs to the TrpC family. In the C-terminal section; belongs to the TrpF family. Monomer.

It catalyses the reaction N-(5-phospho-beta-D-ribosyl)anthranilate = 1-(2-carboxyphenylamino)-1-deoxy-D-ribulose 5-phosphate. The enzyme catalyses 1-(2-carboxyphenylamino)-1-deoxy-D-ribulose 5-phosphate + H(+) = (1S,2R)-1-C-(indol-3-yl)glycerol 3-phosphate + CO2 + H2O. It functions in the pathway amino-acid biosynthesis; L-tryptophan biosynthesis; L-tryptophan from chorismate: step 3/5. It participates in amino-acid biosynthesis; L-tryptophan biosynthesis; L-tryptophan from chorismate: step 4/5. Bifunctional enzyme that catalyzes two sequential steps of tryptophan biosynthetic pathway. The first reaction is catalyzed by the isomerase, coded by the TrpF domain; the second reaction is catalyzed by the synthase, coded by the TrpC domain. In Buchnera aphidicola subsp. Schizaphis graminum (strain Sg), this protein is Tryptophan biosynthesis protein TrpCF (trpC).